A 214-amino-acid chain; its full sequence is Probable nicotinate-nucleotide adenylyltransferase (214 aa).

This sequence belongs to the NadD family.

The enzyme catalyses nicotinate beta-D-ribonucleotide + ATP + H(+) = deamido-NAD(+) + diphosphate. Its pathway is cofactor biosynthesis; NAD(+) biosynthesis; deamido-NAD(+) from nicotinate D-ribonucleotide: step 1/1. In terms of biological role, catalyzes the reversible adenylation of nicotinate mononucleotide (NaMN) to nicotinic acid adenine dinucleotide (NaAD). The sequence is that of Probable nicotinate-nucleotide adenylyltransferase from Thermomicrobium roseum (strain ATCC 27502 / DSM 5159 / P-2).